Here is a 184-residue protein sequence, read N- to C-terminus: Putative tetraheme cytochrome-c type (184 aa).

Topologically, residues 1–14 (MSKHAASSAKRFSL) are cytoplasmic. The chain crosses the membrane as a helical span at residues 15–35 (LALGLMFVGGIVFVWAVDFGI). The Periplasmic portion of the chain corresponds to 36–184 (KTTNTLEFCT…HEPTEPDDAS (149 aa)). Heme-binding residues include Cys44, Cys47, Met50, Cys73, Cys76, and His77. Substrate contacts are provided by Lys89 and Asp95. 8 residues coordinate heme: Asp95, Cys133, Cys136, His137, Cys165, Cys168, His169, and His174.

This sequence belongs to the NapC/NirT/NrfH family. In terms of processing, binds 4 heme groups per subunit.

The protein localises to the cell inner membrane. The polypeptide is Putative tetraheme cytochrome-c type (Allochromatium vinosum (strain ATCC 17899 / DSM 180 / NBRC 103801 / NCIMB 10441 / D) (Chromatium vinosum)).